Consider the following 106-residue polypeptide: HIG1 domain family member 2A, mitochondrial (106 aa).

Ala-2 carries the N-acetylalanine modification. Positions 20–106 (VIEGLSPTVY…LAVTAMKSRP (87 aa)) constitute an HIG1 domain. The next 2 membrane-spanning stretches (helical) occupy residues 47–67 (PVVP…LYSF) and 83–103 (IAAQ…TAMK). Topologically, residues 104-106 (SRP) are mitochondrial matrix.

As to quaternary structure, associates with cytochrome c oxidase (COX, complex IV); proposed complex component.

The protein resides in the mitochondrion membrane. It localises to the mitochondrion inner membrane. In terms of biological role, proposed subunit of cytochrome c oxidase (COX, complex IV), which is the terminal component of the mitochondrial respiratory chain that catalyzes the reduction of oxygen to water. May be involved in cytochrome c oxidase activity. May play a role in the assembly of respiratory supercomplexes. In Homo sapiens (Human), this protein is HIG1 domain family member 2A, mitochondrial (HIGD2A).